We begin with the raw amino-acid sequence, 389 residues long: MAASAAETRVFLEVRGQLQSALLILGEPKEGGMPMNISIMPSSLQMKTPEGCTEIQLPAEVRLVPSSCRGLQFVVGDGLHLRLQTQAKLGTKLISMFNQSSQTQECCTFYCQSCGEVIIKDRKLLRVLPLPSENWGALVGEWCCHPDPFANKSLHPQENDCFIGDSFFLVNLRTSLWQQRPELSPVEMCCVSSDNHCKLEPKANTKVICKRCKVMLGETVSSETTKFYMTEIIIQSSERSFPIIPRSWFVQSVIAQCLVQLSSARSTFRFTIQGQDDKVYILLWLLNSDSLVIESLRNSKYIKKFPLLENTFKADSSSAWSAVKVLYQPCIKSRNEKLVSLWESDISVHPLTLPSATCLELLLILSKSNANLPSSLRRVNSFQVAFLKM.

The residue at position 2 (alanine 2) is an N-acetylalanine. The short motif at 129-159 (PLPSENWGALVGEWCCHPDPFANKSLHPQEN) is the BRAT1-like motif element. Cysteine 144 contributes to the Zn(2+) binding site. The interval 235-257 (QSSERSFPIIPRSWFVQSVIAQC) is interaction with UBE2C. Positions 353–389 (LPSATCLELLLILSKSNANLPSSLRRVNSFQVAFLKM) are HECT-like.

Interacts with UBE2C/UbcH10 (E2 ubiquitin-conjugating enzyme). In vitro, interacts with cyclin-B. Ubiquitinated by UBCH10 (E2 ubiquitin-conjugating enzyme).

It localises to the cytoplasm. It carries out the reaction S-ubiquitinyl-[E2 ubiquitin-conjugating enzyme]-L-cysteine + [acceptor protein]-L-lysine = [E2 ubiquitin-conjugating enzyme]-L-cysteine + N(6)-ubiquitinyl-[acceptor protein]-L-lysine.. It participates in protein modification; protein ubiquitination. Functionally, E3 ubiquitin-protein ligase which accepts ubiquitin from specific E2 ubiquitin-conjugating enzymes, and transfers it to substrates, generally promoting their degradation by the proteasome. Independently of its E3 ubiquitin-protein ligase activity, acts as an inhibitor of CPSF3 endonuclease activity by blocking CPSF3 active site. This Homo sapiens (Human) protein is E3 ubiquitin-protein ligase E3D (UBE3D).